The sequence spans 726 residues: Bromodomain-containing protein 3 (726 aa).

The disordered stretch occupies residues 1 to 35 (MSTATTVAPAGIPATPGPVNPPPPEVSNPSKPGRK). Ser2 is subject to N-acetylserine. A compositionally biased stretch (pro residues) spans 15–26 (TPGPVNPPPPEV). One can recognise a Bromo 1 domain in the interval 34–140 (RKTNQLQYMQ…KIFLQKVAQM (107 aa)). An acetylated histone H3 binding region spans residues 78-80 (KNP). Disordered regions lie at residues 149–169 (PPAPKGKGRKPAAGAQSAGTQ) and 237–305 (VKKK…AGKK). Over residues 248–261 (TTTPTTSAITASRS) the composition is skewed to low complexity. 2 positions are modified to phosphoserine: Ser263 and Ser281. One can recognise a Bromo 2 domain in the interval 306 to 415 (GKLSEHLRYC…DVFEMRFAKM (110 aa)). A Glycyl lysine isopeptide (Lys-Gly) (interchain with G-Cter in SUMO2) cross-link involves residue Lys414. 3 disordered regions span residues 421–462 (EAPA…RATR), 477–575 (LAAL…MSYD), and 637–726 (LQKK…SDSE). Residues 453–524 (SDSEEERATR…AEEEKKAKVA (72 aa)) are a coiled coil. Basic residues predominate over residues 487 to 503 (KPKKKKEKKEKEKKKKD). Residues 504 to 521 (KEKEKEKHKVKAEEEKKA) are compositionally biased toward basic and acidic residues. Over residues 523 to 540 (VAPPAKQAQQKKAPAKKA) the composition is skewed to low complexity. The region spanning 562 to 644 (DSEEEEEGLP…SCLQKKQRKP (83 aa)) is the NET domain. A Phosphoserine modification is found at Ser563. The stretch at 645–684 (FSASGKKQAAKSKEELAQEKKKELEKRLQDVSGQLSSSKK) forms a coiled coil. Positions 655 to 673 (KSKEELAQEKKKELEKRLQ) are enriched in basic and acidic residues. The span at 692–726 (GSAPSGGPSRLSSSSSSESGSSSSSGSSSDSSDSE) shows a compositional bias: low complexity.

Belongs to the BET family. As to quaternary structure, interacts (via bromo domain 1) with GATA1 acetylated at 'Lys-312' and 'Lys-315'. Interacts (via bromo domain 1) with GATA2 acetylated on lysine residues. Interacts (via NET domain) with CHD4 (via KIKL motif). Interacts (via NET domain) with SMARCA4 (via KIKL motif). Interacts (via NET domain) with NSD3 (via KIKL motif). In terms of assembly, (Microbial infection) Interacts with the Integrase protein of Moloney murine leukemia virus (MLV). In terms of tissue distribution, ubiquitous.

It is found in the nucleus. It localises to the chromosome. With respect to regulation, inhibited by JQ1, a thieno-triazolo-1,4-diazepine derivative, which specifically inhibits members of the BET family (BRD2, BRD3 and BRD4). The first bromo domain is inhibited by GSK778 (iBET-BD1), which specifically inhibits the first bromo domain of members of the BET family (BRD2, BRD3 and BRD4). The second bromo domain is inhibited by ABBV-744, which specifically inhibits the second bromo domain of members of the BET family (BRD2, BRD3 and BRD4). The second bromo domain is inhibited by GSK046 (iBET-BD2), which specifically inhibits the second bromo domain of members of the BET family (BRD2, BRD3 and BRD4). Functionally, chromatin reader that recognizes and binds acetylated histones, thereby controlling gene expression and remodeling chromatin structures. Recruits transcription factors and coactivators to target gene sites, and activates RNA polymerase II machinery for transcriptional elongation. In vitro, binds acetylated lysine residues on the N-terminus of histone H2A, H2B, H3 and H4. Involved in endoderm differentiation via its association with long non-coding RNA (lncRNA) DIGIT: BRD3 undergoes liquid-liquid phase separation upon binding to lncRNA DIGIT, promoting binding to histone H3 acetylated at 'Lys-18' (H3K18ac) to induce endoderm gene expression. Also binds non-histones acetylated proteins, such as GATA1 and GATA2: regulates transcription by promoting the binding of the transcription factor GATA1 to its targets. This is Bromodomain-containing protein 3 from Homo sapiens (Human).